Reading from the N-terminus, the 237-residue chain is Orotidine 5'-phosphate decarboxylase (237 aa).

Residues aspartate 10, lysine 33, 60–69 (DLKLHDIPNT), threonine 124, arginine 186, glutamine 195, glycine 215, and arginine 216 contribute to the substrate site. The active-site Proton donor is the lysine 62.

The protein belongs to the OMP decarboxylase family. Type 1 subfamily. In terms of assembly, homodimer.

It catalyses the reaction orotidine 5'-phosphate + H(+) = UMP + CO2. It participates in pyrimidine metabolism; UMP biosynthesis via de novo pathway; UMP from orotate: step 2/2. In terms of biological role, catalyzes the decarboxylation of orotidine 5'-monophosphate (OMP) to uridine 5'-monophosphate (UMP). The sequence is that of Orotidine 5'-phosphate decarboxylase from Lactiplantibacillus plantarum (strain ATCC BAA-793 / NCIMB 8826 / WCFS1) (Lactobacillus plantarum).